Consider the following 336-residue polypeptide: Aspartate carbamoyltransferase catalytic subunit (336 aa).

Residues Arg-72 and Thr-73 each coordinate carbamoyl phosphate. Lys-100 serves as a coordination point for L-aspartate. Positions 122, 155, and 158 each coordinate carbamoyl phosphate. Positions 188 and 242 each coordinate L-aspartate. Carbamoyl phosphate-binding residues include Gly-288 and Pro-289.

This sequence belongs to the aspartate/ornithine carbamoyltransferase superfamily. ATCase family. Heterododecamer (2C3:3R2) of six catalytic PyrB chains organized as two trimers (C3), and six regulatory PyrI chains organized as three dimers (R2).

It catalyses the reaction carbamoyl phosphate + L-aspartate = N-carbamoyl-L-aspartate + phosphate + H(+). The protein operates within pyrimidine metabolism; UMP biosynthesis via de novo pathway; (S)-dihydroorotate from bicarbonate: step 2/3. In terms of biological role, catalyzes the condensation of carbamoyl phosphate and aspartate to form carbamoyl aspartate and inorganic phosphate, the committed step in the de novo pyrimidine nucleotide biosynthesis pathway. The sequence is that of Aspartate carbamoyltransferase catalytic subunit from Lactobacillus leichmannii.